The following is a 94-amino-acid chain: Integration host factor subunit beta (94 aa).

Belongs to the bacterial histone-like protein family. As to quaternary structure, heterodimer of an alpha and a beta chain.

This protein is one of the two subunits of integration host factor, a specific DNA-binding protein that functions in genetic recombination as well as in transcriptional and translational control. The chain is Integration host factor subunit beta from Yersinia pseudotuberculosis serotype O:1b (strain IP 31758).